The following is a 376-amino-acid chain: tRNA 2-selenouridine synthase (376 aa).

One can recognise a Rhodanese domain in the interval 15–138; the sequence is FVAGKPLIDL…MRQYLIGVIE (124 aa). C98 functions as the S-selanylcysteine intermediate in the catalytic mechanism.

Belongs to the SelU family. Monomer.

It catalyses the reaction 5-methylaminomethyl-2-thiouridine(34) in tRNA + selenophosphate + (2E)-geranyl diphosphate + H2O + H(+) = 5-methylaminomethyl-2-selenouridine(34) in tRNA + (2E)-thiogeraniol + phosphate + diphosphate. It carries out the reaction 5-methylaminomethyl-2-thiouridine(34) in tRNA + (2E)-geranyl diphosphate = 5-methylaminomethyl-S-(2E)-geranyl-thiouridine(34) in tRNA + diphosphate. The enzyme catalyses 5-methylaminomethyl-S-(2E)-geranyl-thiouridine(34) in tRNA + selenophosphate + H(+) = 5-methylaminomethyl-2-(Se-phospho)selenouridine(34) in tRNA + (2E)-thiogeraniol. The catalysed reaction is 5-methylaminomethyl-2-(Se-phospho)selenouridine(34) in tRNA + H2O = 5-methylaminomethyl-2-selenouridine(34) in tRNA + phosphate. In terms of biological role, involved in the post-transcriptional modification of the uridine at the wobble position (U34) of tRNA(Lys), tRNA(Glu) and tRNA(Gln). Catalyzes the conversion of 2-thiouridine (S2U-RNA) to 2-selenouridine (Se2U-RNA). Acts in a two-step process involving geranylation of 2-thiouridine (S2U) to S-geranyl-2-thiouridine (geS2U) and subsequent selenation of the latter derivative to 2-selenouridine (Se2U) in the tRNA chain. The sequence is that of tRNA 2-selenouridine synthase from Shewanella oneidensis (strain ATCC 700550 / JCM 31522 / CIP 106686 / LMG 19005 / NCIMB 14063 / MR-1).